We begin with the raw amino-acid sequence, 265 residues long: Small ribosomal subunit protein uS2 (265 aa).

Belongs to the universal ribosomal protein uS2 family.

This is Small ribosomal subunit protein uS2 from Aliarcobacter butzleri (strain RM4018) (Arcobacter butzleri).